A 511-amino-acid polypeptide reads, in one-letter code: Bifunctional purine biosynthesis protein PurH (511 aa).

An MGS-like domain is found at methionine 1–valine 144.

This sequence belongs to the PurH family.

It catalyses the reaction (6R)-10-formyltetrahydrofolate + 5-amino-1-(5-phospho-beta-D-ribosyl)imidazole-4-carboxamide = 5-formamido-1-(5-phospho-D-ribosyl)imidazole-4-carboxamide + (6S)-5,6,7,8-tetrahydrofolate. It carries out the reaction IMP + H2O = 5-formamido-1-(5-phospho-D-ribosyl)imidazole-4-carboxamide. Its pathway is purine metabolism; IMP biosynthesis via de novo pathway; 5-formamido-1-(5-phospho-D-ribosyl)imidazole-4-carboxamide from 5-amino-1-(5-phospho-D-ribosyl)imidazole-4-carboxamide (10-formyl THF route): step 1/1. It participates in purine metabolism; IMP biosynthesis via de novo pathway; IMP from 5-formamido-1-(5-phospho-D-ribosyl)imidazole-4-carboxamide: step 1/1. This chain is Bifunctional purine biosynthesis protein PurH, found in Pediococcus pentosaceus (strain ATCC 25745 / CCUG 21536 / LMG 10740 / 183-1w).